The following is a 118-amino-acid chain: UPF0329 protein ECU03_0030/ECU05_0040/ECU06_0010/ECU06_1710/ECU11_0010 (118 aa).

Belongs to the UPF0329 family.

The protein is UPF0329 protein ECU03_0030/ECU05_0040/ECU06_0010/ECU06_1710/ECU11_0010 of Encephalitozoon cuniculi (strain GB-M1) (Microsporidian parasite).